The following is a 40-amino-acid chain: Photosystem II reaction center protein J (40 aa).

A helical membrane pass occupies residues 8–28; the sequence is IPLWVIGTVAGILVIGIIGIF.

The protein belongs to the PsbJ family. PSII is composed of 1 copy each of membrane proteins PsbA, PsbB, PsbC, PsbD, PsbE, PsbF, PsbH, PsbI, PsbJ, PsbK, PsbL, PsbM, PsbT, PsbX, PsbY, PsbZ, Psb30/Ycf12, at least 3 peripheral proteins of the oxygen-evolving complex and a large number of cofactors. It forms dimeric complexes.

It is found in the plastid. Its subcellular location is the chloroplast thylakoid membrane. In terms of biological role, one of the components of the core complex of photosystem II (PSII). PSII is a light-driven water:plastoquinone oxidoreductase that uses light energy to abstract electrons from H(2)O, generating O(2) and a proton gradient subsequently used for ATP formation. It consists of a core antenna complex that captures photons, and an electron transfer chain that converts photonic excitation into a charge separation. This chain is Photosystem II reaction center protein J, found in Lobularia maritima (Sweet alyssum).